A 420-amino-acid chain; its full sequence is Tyrosine--tRNA ligase (420 aa).

Y36 contacts L-tyrosine. The 'HIGH' region signature appears at 41 to 50 (PTADSLHIGH). Positions 170 and 174 each coordinate L-tyrosine. The 'KMSKS' region motif lies at 231 to 235 (KFGKS). K234 contacts ATP. In terms of domain architecture, S4 RNA-binding spans 353-420 (TNIVEVLIET…KKKYFMVNYQ (68 aa)).

The protein belongs to the class-I aminoacyl-tRNA synthetase family. TyrS type 1 subfamily. Homodimer.

Its subcellular location is the cytoplasm. The enzyme catalyses tRNA(Tyr) + L-tyrosine + ATP = L-tyrosyl-tRNA(Tyr) + AMP + diphosphate + H(+). In terms of biological role, catalyzes the attachment of tyrosine to tRNA(Tyr) in a two-step reaction: tyrosine is first activated by ATP to form Tyr-AMP and then transferred to the acceptor end of tRNA(Tyr). The sequence is that of Tyrosine--tRNA ligase from Staphylococcus aureus (strain bovine RF122 / ET3-1).